The primary structure comprises 388 residues: Cell adhesion molecule 4 (388 aa).

An N-terminal signal peptide occupies residues 1–20; the sequence is MGRARRFQWPLLLLWAAAAG. Residues 21–119 form the Ig-like V-type domain; the sequence is PGTGQEVQTE…DTHHQIATLT (99 aa). The Extracellular portion of the chain corresponds to 25–324; that stretch reads QEVQTENVTV…VEAQTSVPYA (300 aa). N-linked (GlcNAc...) asparagine glycans are attached at residues Asn31 and Asn67. 3 disulfide bridges follow: Cys44–Cys104, Cys145–Cys199, and Cys245–Cys291. Ig-like C2-type domains lie at 124-219 and 224-307; these read PENP…YVLD and PTAR…YVLV. Asn286 is a glycosylation site (N-linked (GlcNAc...) asparagine). The helical transmembrane segment at 325-345 threads the bilayer; it reads IVGGILALLVFLIICVLVGMV. The Cytoplasmic segment spans residues 346–388; it reads WCSVRQKGSYLTHEASGLDEQGEAREAFLNGGDGHKRKEEFFI. Residue Ser361 is modified to Phosphoserine.

Belongs to the nectin family. As to quaternary structure, monomer and homodimer. Post-translationally, N-glycosylated. As to expression, expressed in the brain and several organs including the kidney and liver.

The protein resides in the membrane. Functionally, involved in the cell-cell adhesion. Has calcium- and magnesium-independent cell-cell adhesion activity. May have tumor-suppressor activity. This Mus musculus (Mouse) protein is Cell adhesion molecule 4 (Cadm4).